Here is a 245-residue protein sequence, read N- to C-terminus: tRNA pseudouridine synthase A (245 aa).

Asp52 acts as the Nucleophile in catalysis. Position 111 (Tyr111) interacts with substrate.

The protein belongs to the tRNA pseudouridine synthase TruA family. Homodimer.

The enzyme catalyses uridine(38/39/40) in tRNA = pseudouridine(38/39/40) in tRNA. Formation of pseudouridine at positions 38, 39 and 40 in the anticodon stem and loop of transfer RNAs. This is tRNA pseudouridine synthase A from Ehrlichia chaffeensis (strain ATCC CRL-10679 / Arkansas).